The primary structure comprises 149 residues: Histone H2A (149 aa).

The span at 1–23 (METAGKAKKGFGGRKGGPRKKSV) shows a compositional bias: basic residues. 2 disordered regions span residues 1 to 25 (META…SVTR) and 127 to 149 (KTAE…PKKA). The span at 127–138 (KTAEKAAKEPKS) shows a compositional bias: basic and acidic residues. 2 consecutive short sequence motifs (SPKK motif) follow at residues 138-141 (SPSK) and 145-148 (SPKK).

Belongs to the histone H2A family. In terms of assembly, the nucleosome is a histone octamer containing two molecules each of H2A, H2B, H3 and H4 assembled in one H3-H4 heterotetramer and two H2A-H2B heterodimers. The octamer wraps approximately 147 bp of DNA.

The protein localises to the nucleus. Its subcellular location is the chromosome. Its function is as follows. Core component of nucleosome. Nucleosomes wrap and compact DNA into chromatin, limiting DNA accessibility to the cellular machineries which require DNA as a template. Histones thereby play a central role in transcription regulation, DNA repair, DNA replication and chromosomal stability. DNA accessibility is regulated via a complex set of post-translational modifications of histones, also called histone code, and nucleosome remodeling. The sequence is that of Histone H2A from Petroselinum crispum (Parsley).